We begin with the raw amino-acid sequence, 494 residues long: Alpha-amylase A (494 aa).

Positions 1 to 18 (MFLAKSLVCLALLAVANA) are cleaved as a signal peptide. Residue Gln-19 is modified to Pyrrolidone carboxylic acid. An intrachain disulfide couples Cys-46 to Cys-102. Ca(2+) is bound by residues Asn-116, Arg-165, and Asp-174. Cys-153 and Cys-167 are disulfide-bonded. Residue Arg-202 coordinates chloride. Asp-204 functions as the Nucleophile in the catalytic mechanism. His-208 is a binding site for Ca(2+). Glu-241 functions as the Proton donor in the catalytic mechanism. Chloride-binding residues include Asn-304 and Arg-343. 2 disulfides stabilise this stretch: Cys-376/Cys-382 and Cys-448/Cys-460.

The protein belongs to the glycosyl hydrolase 13 family. As to quaternary structure, monomer. Ca(2+) is required as a cofactor. Chloride serves as cofactor.

The enzyme catalyses Endohydrolysis of (1-&gt;4)-alpha-D-glucosidic linkages in polysaccharides containing three or more (1-&gt;4)-alpha-linked D-glucose units.. The polypeptide is Alpha-amylase A (Amy-d) (Drosophila mauritiana (Fruit fly)).